Here is a 151-residue protein sequence, read N- to C-terminus: Methylglyoxal synthase (151 aa).

Residues 6–151 (RTMPAHKHVA…DYDAYLAERT (146 aa)) enclose the MGS-like domain. Substrate contacts are provided by residues His19, Lys23, 45–48 (TGTT), and 65–66 (SG). Catalysis depends on Asp71, which acts as the Proton donor/acceptor. His98 serves as a coordination point for substrate.

This sequence belongs to the methylglyoxal synthase family.

The catalysed reaction is dihydroxyacetone phosphate = methylglyoxal + phosphate. Its function is as follows. Catalyzes the formation of methylglyoxal from dihydroxyacetone phosphate. This Vibrio campbellii (strain ATCC BAA-1116) protein is Methylglyoxal synthase.